We begin with the raw amino-acid sequence, 103 residues long: Alkanal monooxygenase alpha chain (103 aa).

Heterodimer of an alpha and a beta chain.

The enzyme catalyses a long-chain fatty aldehyde + FMNH2 + O2 = a long-chain fatty acid + hnu + FMN + H2O + 2 H(+). Functionally, light-emitting reaction in luminous bacteria. The sequence is that of Alkanal monooxygenase alpha chain (luxA) from Vibrio cholerae.